A 701-amino-acid chain; its full sequence is Polyribonucleotide nucleotidyltransferase (701 aa).

Mg(2+)-binding residues include D485 and D491. Residues 552–611 form the KH domain; that stretch reads PKTQIMSINPDKIRDVIGAGGKVINKIIQDTGVKIDIKEDGTVFVSSTDHNGVNEAIKII. The S1 motif domain maps to 621-689; sequence GEVYLGKVTK…NQGRINLSRK (69 aa).

This sequence belongs to the polyribonucleotide nucleotidyltransferase family. Mg(2+) serves as cofactor.

It localises to the cytoplasm. It carries out the reaction RNA(n+1) + phosphate = RNA(n) + a ribonucleoside 5'-diphosphate. Functionally, involved in mRNA degradation. Catalyzes the phosphorolysis of single-stranded polyribonucleotides processively in the 3'- to 5'-direction. The chain is Polyribonucleotide nucleotidyltransferase from Clostridium beijerinckii (strain ATCC 51743 / NCIMB 8052) (Clostridium acetobutylicum).